Here is a 102-residue protein sequence, read N- to C-terminus: Small ribosomal subunit protein uS10 (102 aa).

Belongs to the universal ribosomal protein uS10 family. In terms of assembly, part of the 30S ribosomal subunit.

Its function is as follows. Involved in the binding of tRNA to the ribosomes. This Nocardioides sp. (strain ATCC BAA-499 / JS614) protein is Small ribosomal subunit protein uS10.